Reading from the N-terminus, the 67-residue chain is Large ribosomal subunit protein uL29 (67 aa).

It belongs to the universal ribosomal protein uL29 family.

This is Large ribosomal subunit protein uL29 from Desulforudis audaxviator (strain MP104C).